The primary structure comprises 160 residues: Putative pre-16S rRNA nuclease (160 aa).

The protein belongs to the YqgF nuclease family.

It is found in the cytoplasm. Functionally, could be a nuclease involved in processing of the 5'-end of pre-16S rRNA. In Jannaschia sp. (strain CCS1), this protein is Putative pre-16S rRNA nuclease.